Consider the following 333-residue polypeptide: Nucleoid-associated protein PSPPH_1145 (333 aa).

Belongs to the YejK family.

It is found in the cytoplasm. It localises to the nucleoid. The protein is Nucleoid-associated protein PSPPH_1145 of Pseudomonas savastanoi pv. phaseolicola (strain 1448A / Race 6) (Pseudomonas syringae pv. phaseolicola (strain 1448A / Race 6)).